A 2515-amino-acid polypeptide reads, in one-letter code: MHHPFGKEEAASQKQLLGFFCECLRRGEWELAKACVPQLHEAQGDIPKKVEDILWALVLCPNQLRCGQDISPQRLAWVWLLVLEKWLALEKKLLPTGFRRKLEFLLLSEDLPSDISEDILKELYAVLAQDRVDPVLDGNLRQESWPPRLSSEAVSMLWDLLREAPQVAQALLELLLGEVDGAGLRGWPLQKALVDLIRKALRTLQGPTAAPPGTVDAIYGALRTLRCPAEPLGAELRLLCEELLEACRSEGSPLREERLLGCLLHKAGRDLVSLYSHTYAEKATPSGKVPPDPLDPERAMLALFSNPDPAHAWKVAYFYCLSNSKHFLEQILVTALTLLKEEDFPSLGCLLSREFRPLSRLLVLLGWTHCQSLASAKSLLQTLHRTQDQGCDKLLRDACDGLWAHLEVLEWCVQHSSNPIPKRDLLCHLHGGDSHSVLYSLHHLTNLPALREEDVLKLLQKVPAKDPQQEHDSADTLVPAHLSQSQSLTLYRSFCAMKYAIYALCVSSHQHSQCRQCKDGPSDDLASVAEPMNDPPSSPGASDLFSTYLARCQQYLCSIPDSLCLELLENVFSLLLITSADLHPEPHLPEDYAEDAQPERKSEQGALGTARGLAYTVPSCPKPEPKDSSPEPHGHSFLDLKHFTSSVSGFLADEFAIGAFLRLLQEQLDELSSRGPPEKPKLLEDQSGSGSRDGLQSRLHQFSKVLSEAQWRYKVVTSIQGSEEQPSRRYRPITTRHPSLRRGRRTRKSRADDQDKGSRSSLENTSSELSTSTSEGSLSAASGKNELEGRLQPQPHSSLIPMMFSPPESLLASCILRGNFAEAHQVVFTFNLKSSHGSGELMFMERYQEVIQELAQVEHKIENQNSDGGSSTIRRTGSGRSTLQAIGSAAAAGMVFYSISDVTDKLLSTSGDPIPTLQEDFWISSCPMELTAPLKEVLEDLSPPAMAAFDLACSQCQLWKTGKQLLETAERRLNSSLESQGRRLDHVFVNADGIRGFPGVLQQISKILNYPLVSAGQIKSESGEDKGGGPPRCSIAELLQMCWPSLTEDCVASHTTLSQQLEQILQSLREALELPEPRSTPLSSLVEQVAQKAPEAEAHPVYIQAQLLQKNLGKQTAAGGKQTDYMGTFFRYCSTLAAVLLRSLSSEPDHVEVKVGNPFVLLQQSSSQLVSHLLLERQVPPDRLAALLAQEGLSLSVPQVIVNCCCEPLTLCSSRQSKQTSALLTRLGTLAQLHTSRCLDDLPLSTLSCLKSTENPTLERKPPSSPRDSSPPALTSSALAFLKSRSKLLATVACLGASRGSKVTKTSLSWKELRGRREVPLTAEQVARECERLLEQFPVLEASLLAAWEPLRGSSEQGQSLASSLCGQASLSTVLLGPHSPTALDVLTEAFEEALVARDWRRALQLTDVYGQDVDDLSSIQDAVLSCAAACDKEGWQFLFAVKDACLRSQLTLQFVDRWPLEWCLEILAYCLSDTAVQDGLECELRRKLAELQVYQKILGLQSTPVWCNWQALRNCCAEDPSTVMNLILEAKEYELCEEWGCLYPIPREHLINLHQKHLLHLLERGDHEKALQQQLLQRIPDPTMCLEVTEQSLDQHPSLATSHFLANYLTTHFYGELTADRHREIQALYMGSKVLLTLPEQHRASYAHLSSSPLLMLEQLLMNMKVDWAAVAVQTLRQLLAGQEIGFTTDEVDALLSRYAGKALDFPYPLREKRSDSVIHLQEIVSQVSDLETLSRSPSAEFSSATAPGVSTVHSPSVRERNFPPSQLPLEFVPPATPPARHQWVPDESESVCMVCRRERFTMFNRRHHCRRCGRLVCSSCSTKKMVVEGCRENPTRVCDQCYSYFNQDVPEENPGQAEAPDSSKSESPPYSAVVRVPKAAEVEWILDLNEEENELVRSEFYYEQAPSASLCIAILNLHEDSVSCGHQLIEHCCRLSQGLTNPEVDAGLLTDIMKQLLFSAKMMFVKAGQSQDLALCDSYISKVDVLNILVAAAYRHVPSLDQILQPAAVTRLRNQLLEAEYYQLGVEVSTKTGLDPTGAWHAWGMACLKAGNLTAAREKFSRCLKPPFDLNQLSHGSRLVQEVVEYLESTARPLLSVQDDDFLATLKELEATLRTQSLSLEVIPEGKILNNTYYQECLFYLHSYSTHLAIISFYVRHSCLREALLHLLHTESPPEVFIEGIFQPSYKSGKLHDLENLLESIDSSLESWGKYLIAACQHLQKKNYYHILYELQQFMKDHVRAAMTCIRFFTHKAKTYTELGEKLSWLLKAKDHLKIYLQETSRRSGRKKTTFFRKKMTASDVSRHMNTLQLQMEVTRFLHRCESAGTSQVTTSPLPTLFGNNHMKMDVACKVMLGGKNVEDGFGIAFRVLQDFQLDAAATYCKAARQLVEREKFGEIRQLLKCVSESGMAAQSDRDTVLLNCVEAFRRIPPQELEGLIQAIHSDDNKVQAYLKCCKLRSAYLIAVKQEHSRAAVLVEQVQQAAKSSGDAVVQDICSQWLLTSRSRGAHGSASRK.

Disordered regions lie at residues 520 to 540 (GPSD…SSPG), 586 to 634 (PHLP…EPHG), 672 to 696 (SSRG…DGLQ), and 718 to 800 (SIQG…SSLI). Basic and acidic residues predominate over residues 623-634 (PEPKDSSPEPHG). Basic residues predominate over residues 738–748 (PSLRRGRRTRK). Positions 749 to 758 (SRADDQDKGS) are enriched in basic and acidic residues. The segment covering 759 to 783 (RSSLENTSSELSTSTSEGSLSAASG) has biased composition (low complexity). Ser-774 is subject to Phosphoserine. A coiled-coil region spans residues 842–869 (MFMERYQEVIQELAQVEHKIENQNSDGG). The disordered stretch occupies residues 1253–1273 (TENPTLERKPPSSPRDSSPPA). Residues Ser-1718, Ser-1740, Ser-1756, and Ser-1758 each carry the phosphoserine modification. The disordered stretch occupies residues 1740–1760 (SAEFSSATAPGVSTVHSPSVR). The FYVE-type zinc-finger motif lies at 1788-1848 (DESESVCMVC…VCDQCYSYFN (61 aa)). The Zn(2+) site is built by Cys-1794, Cys-1797, Cys-1811, Cys-1814, Cys-1819, Cys-1822, Cys-1840, and Cys-1843.

Belongs to the ZFYVE26 family. In terms of assembly, interacts with AP5Z1, AP5B1, AP5S1 and SPG11. Interacts with TTC19 and KIF13A.

It is found in the cytoplasm. The protein localises to the cytoskeleton. It localises to the microtubule organizing center. Its subcellular location is the centrosome. The protein resides in the midbody. Functionally, phosphatidylinositol 3-phosphate-binding protein required for the abscission step in cytokinesis: recruited to the midbody during cytokinesis and acts as a regulator of abscission. May also be required for efficient homologous recombination DNA double-strand break repair. This is Zinc finger FYVE domain-containing protein 26 (ZFYVE26) from Bos taurus (Bovine).